The following is an 800-amino-acid chain: Phenylalanine--tRNA ligase beta subunit (800 aa).

In terms of domain architecture, tRNA-binding spans T39–L154. One can recognise a B5 domain in the interval C408–S483. Mg(2+) contacts are provided by D461, D467, E470, and E471. An FDX-ACB domain is found at P708 to R800.

It belongs to the phenylalanyl-tRNA synthetase beta subunit family. Type 1 subfamily. Tetramer of two alpha and two beta subunits. Mg(2+) is required as a cofactor.

It localises to the cytoplasm. The catalysed reaction is tRNA(Phe) + L-phenylalanine + ATP = L-phenylalanyl-tRNA(Phe) + AMP + diphosphate + H(+). The protein is Phenylalanine--tRNA ligase beta subunit of Staphylococcus saprophyticus subsp. saprophyticus (strain ATCC 15305 / DSM 20229 / NCIMB 8711 / NCTC 7292 / S-41).